The primary structure comprises 161 residues: MADTDDIIDYESDDLTEYEDDEEDGESLETSDIDPKSSYKIVESTSTHIEDAHSNLKHIGNHISALKRRYTRRISLFEIAGIIAESYNLLQRGRLPLVSEFSDETMKQNMLHVIIQEIEEGSCPIVIEKNGELLSVNDFDKDGLKFHLDYIIKIWKLQKRY.

Acidic residues predominate over residues 1–32; the sequence is MADTDDIIDYESDDLTEYEDDEEDGESLETSD. Residues 1–35 are disordered; the sequence is MADTDDIIDYESDDLTEYEDDEEDGESLETSDIDP.

Belongs to the poxviridae DNA-directed RNA polymerase 19 kDa subunit family. As to quaternary structure, the DNA-dependent RNA polymerase used for intermediate and late genes expression consists of eight subunits Rpo30/OPG66, Rpo7/OPG90, Rpo22/OPG103, Rpo147/OPG105, Rpo18/OPG119, Rpo19/OPG131, Rpo132/OPG151 and Rpo35/OPG156. The same holoenzyme, with the addition of the transcription-specificity factor OPG109, is used for early gene expression.

The protein localises to the virion. The catalysed reaction is RNA(n) + a ribonucleoside 5'-triphosphate = RNA(n+1) + diphosphate. Part of the DNA-dependent RNA polymerase which catalyzes the transcription of viral DNA into RNA using the four ribonucleoside triphosphates as substrates. Responsible for the transcription of early, intermediate and late genes. DNA-dependent RNA polymerase associates with the early transcription factor (ETF), itself composed of OPG118 and OPG133, thereby allowing the early genes transcription. Late transcription, and probably also intermediate transcription, require newly synthesized RNA polymerase. The chain is DNA-directed RNA polymerase 19 kDa subunit (OPG131) from Monkeypox virus.